Reading from the N-terminus, the 235-residue chain is MGGSRHFAVDDAAQRRRLEAGLDAIGLALTPAQVDTLFAYLTLLRKWNGVYNLTAIRHPDEMLTHHLLDSLTAVPALAEAARSANVAQGARGRVLDVGSGGGMPGMPLAISCPDVSVLMVDIVQKKTAFLTQCRAQLHLTNAAAHWGPVEKIDDEQGYAVITSRAFAELTDFVTLSGHLLAPGGKLIAMKGVYPQAEIDRMEAAGLMADWQVEAVPKLVVPELDVERHLVVLSRR.

S-adenosyl-L-methionine is bound by residues G98, M103, 149–150, and R164; that span reads VE.

This sequence belongs to the methyltransferase superfamily. RNA methyltransferase RsmG family.

It localises to the cytoplasm. The enzyme catalyses guanosine(527) in 16S rRNA + S-adenosyl-L-methionine = N(7)-methylguanosine(527) in 16S rRNA + S-adenosyl-L-homocysteine. In terms of biological role, specifically methylates the N7 position of guanine in position 527 of 16S rRNA. The protein is Ribosomal RNA small subunit methyltransferase G of Cupriavidus metallidurans (strain ATCC 43123 / DSM 2839 / NBRC 102507 / CH34) (Ralstonia metallidurans).